A 100-amino-acid polypeptide reads, in one-letter code: Large ribosomal subunit protein uL23 (100 aa).

The protein belongs to the universal ribosomal protein uL23 family. As to quaternary structure, part of the 50S ribosomal subunit. Contacts protein L29, and trigger factor when it is bound to the ribosome.

Its function is as follows. One of the early assembly proteins it binds 23S rRNA. One of the proteins that surrounds the polypeptide exit tunnel on the outside of the ribosome. Forms the main docking site for trigger factor binding to the ribosome. In Edwardsiella ictaluri (strain 93-146), this protein is Large ribosomal subunit protein uL23.